The chain runs to 344 residues: NAD-dependent alcohol dehydrogenase (344 aa).

Residues cysteine 38, histidine 66, aspartate 96, cysteine 99, cysteine 102, cysteine 110, and cysteine 152 each coordinate Zn(2+).

The protein belongs to the zinc-containing alcohol dehydrogenase family. As to quaternary structure, homodimer and homotetramer. Zn(2+) serves as cofactor.

The enzyme catalyses a primary alcohol + NAD(+) = an aldehyde + NADH + H(+). The catalysed reaction is a secondary alcohol + NAD(+) = a ketone + NADH + H(+). The chain is NAD-dependent alcohol dehydrogenase (adh) from Sulfolobus acidocaldarius (strain ATCC 33909 / DSM 639 / JCM 8929 / NBRC 15157 / NCIMB 11770).